The chain runs to 435 residues: Enolase (435 aa).

Gln167 lines the (2R)-2-phosphoglycerate pocket. The Proton donor role is filled by Glu209. Mg(2+) contacts are provided by Asp246, Glu292, and Asp319. (2R)-2-phosphoglycerate contacts are provided by Lys344, Arg373, Ser374, and Lys395. Lys344 functions as the Proton acceptor in the catalytic mechanism.

This sequence belongs to the enolase family. The cofactor is Mg(2+).

The protein resides in the cytoplasm. Its subcellular location is the secreted. It localises to the cell surface. The enzyme catalyses (2R)-2-phosphoglycerate = phosphoenolpyruvate + H2O. The protein operates within carbohydrate degradation; glycolysis; pyruvate from D-glyceraldehyde 3-phosphate: step 4/5. Functionally, catalyzes the reversible conversion of 2-phosphoglycerate (2-PG) into phosphoenolpyruvate (PEP). It is essential for the degradation of carbohydrates via glycolysis. In Lachnospira eligens (strain ATCC 27750 / DSM 3376 / VPI C15-48 / C15-B4) (Eubacterium eligens), this protein is Enolase.